A 397-amino-acid chain; its full sequence is Phosphoglycerate kinase (397 aa).

Substrate contacts are provided by residues 21–23 (DFN), arginine 37, 60–63 (HLGR), arginine 119, and arginine 152. ATP-binding positions include lysine 203, glycine 294, glutamate 325, and 354–357 (GGDS).

Belongs to the phosphoglycerate kinase family. As to quaternary structure, monomer.

Its subcellular location is the cytoplasm. It carries out the reaction (2R)-3-phosphoglycerate + ATP = (2R)-3-phospho-glyceroyl phosphate + ADP. Its pathway is carbohydrate degradation; glycolysis; pyruvate from D-glyceraldehyde 3-phosphate: step 2/5. The polypeptide is Phosphoglycerate kinase (Chlorobium chlorochromatii (strain CaD3)).